A 329-amino-acid chain; its full sequence is Phospholipid scramblase 4 (329 aa).

Residues 1–51 (MSGVVPTAPEQPAGEMENQTKPPDPRPDAPPEYNSHFLPGPPGTAVPPPTG) are disordered. The interval 1–98 (MSGVVPTAPE…PMPNQSVPIT (98 aa)) is proline-rich domain (PRD). The Cytoplasmic segment spans residues 1 to 303 (MSGVVPTAPE…IHFPLDLDVK (303 aa)). The short motif at 18–25 (NQTKPPDP) is the SH3-binding 1 element. The PPxY motif motif lies at 30 to 33 (PPEY). Pro residues predominate over residues 39-51 (PGPPGTAVPPPTG). The short motif at 41–49 (PPGTAVPPP) is the SH3-binding 2 element. Residues tyrosine 83 and tyrosine 88 each carry the phosphotyrosine; by ABL modification. The SH3-binding 3 motif lies at 98–106 (TWMPGPTPM). S-palmitoyl cysteine attachment occurs at residues cysteine 197, cysteine 198, cysteine 199, cysteine 201, and cysteine 202. The Nuclear localization signal motif lies at 271-283 (NIGSIIRKWNGLL). Residues 304–320 (MKAMIFGACFLIDFMYF) traverse the membrane as a helical segment. Topologically, residues 321-329 (ERSPPQRSR) are extracellular.

The protein belongs to the phospholipid scramblase family. Interacts with PDCD6. Interacts with KPNA2; this interaction mediates the nucleus import of PLSCR4. The cofactor is Ca(2+). Mg(2+) is required as a cofactor. Requires Zn(2+) as cofactor. Expressed in heart, brain, placenta, lung, liver, kidney, pancreas, spleen, thymus, prostate, testis, uterus, small intestine and colon. Not detected in peripheral blood lymphocytes.

It localises to the cell membrane. The protein localises to the nucleus. The catalysed reaction is a 1,2-diacyl-sn-glycero-3-phosphocholine(in) = a 1,2-diacyl-sn-glycero-3-phosphocholine(out). The enzyme catalyses a 1,2-diacyl-sn-glycero-3-phospho-L-serine(in) = a 1,2-diacyl-sn-glycero-3-phospho-L-serine(out). Catalyzes metal ion-induced ATP-independent rapid bidirectional and non-specific movement of phospholipids (lipid scrambling or lipid flip-flop) between the inner and outer leaflet of the plasma membrane and participates in the redistribution of phospholipids between membrane leaflets. Metal ions bind to the calcium-binding site and induce conformation change in the protein. Has a greater affi nity for Ca(2+) than Mg(2+) and Zn(2+). The polypeptide is Phospholipid scramblase 4 (Homo sapiens (Human)).